A 430-amino-acid chain; its full sequence is GTPase Obg (430 aa).

The 158-residue stretch at 1 to 158 (MFVDQVKISL…LDVSLELKLL (158 aa)) folds into the Obg domain. The tract at residues 118–145 (KGGRGGRGNSRFATPRNPAPDFSEKGEP) is disordered. Positions 159–329 (ADVGLVGFPS…LLYAIADKLE (171 aa)) constitute an OBG-type G domain. GTP-binding positions include 165-172 (GFPSVGKS), 190-194 (FTTIK), 212-215 (DLPG), 282-285 (NKMD), and 310-312 (STI). Ser-172 and Thr-192 together coordinate Mg(2+). Residues 352–430 (KHTPSQDKFT…ILGGEFEFVE (79 aa)) form the OCT domain.

The protein belongs to the TRAFAC class OBG-HflX-like GTPase superfamily. OBG GTPase family. Monomer. Mg(2+) serves as cofactor.

It is found in the cytoplasm. Functionally, an essential GTPase which binds GTP, GDP and possibly (p)ppGpp with moderate affinity, with high nucleotide exchange rates and a fairly low GTP hydrolysis rate. Plays a role in control of the cell cycle, stress response, ribosome biogenesis and in those bacteria that undergo differentiation, in morphogenesis control. The sequence is that of GTPase Obg from Staphylococcus aureus (strain bovine RF122 / ET3-1).